Reading from the N-terminus, the 343-residue chain is Probable long-chain-alcohol O-fatty-acyltransferase 2 (343 aa).

8 consecutive transmembrane segments (helical) span residues 7–27 (NLIK…YISS), 36–56 (LLSL…FSSV), 58–78 (FCVI…FLFA), 117–137 (PMSK…LHVY), 148–168 (FAFL…ILVF), 235–255 (GMLA…FYVI), 260–280 (TWEV…EIAM), and 292–312 (AVSG…LFYP).

It belongs to the wax synthase family.

The protein resides in the membrane. It carries out the reaction a long chain fatty alcohol + a fatty acyl-CoA = a wax ester + CoA. In terms of biological role, catalyzes the final step in the synthesis of long-chain linear esters (waxes). The chain is Probable long-chain-alcohol O-fatty-acyltransferase 2 (AT2) from Arabidopsis thaliana (Mouse-ear cress).